A 364-amino-acid chain; its full sequence is Chorismate synthase (364 aa).

Residues Arg48 and Arg54 each coordinate NADP(+). Residues 130-132, 242-243, Gly287, 302-306, and Arg328 each bind FMN; these read RSS, NA, and KPTSS.

The protein belongs to the chorismate synthase family. As to quaternary structure, homotetramer. FMNH2 serves as cofactor.

It catalyses the reaction 5-O-(1-carboxyvinyl)-3-phosphoshikimate = chorismate + phosphate. The protein operates within metabolic intermediate biosynthesis; chorismate biosynthesis; chorismate from D-erythrose 4-phosphate and phosphoenolpyruvate: step 7/7. In terms of biological role, catalyzes the anti-1,4-elimination of the C-3 phosphate and the C-6 proR hydrogen from 5-enolpyruvylshikimate-3-phosphate (EPSP) to yield chorismate, which is the branch point compound that serves as the starting substrate for the three terminal pathways of aromatic amino acid biosynthesis. This reaction introduces a second double bond into the aromatic ring system. The polypeptide is Chorismate synthase (Allorhizobium ampelinum (strain ATCC BAA-846 / DSM 112012 / S4) (Agrobacterium vitis (strain S4))).